Reading from the N-terminus, the 130-residue chain is Small ribosomal subunit protein uS9 (130 aa).

The protein belongs to the universal ribosomal protein uS9 family.

This Bordetella pertussis (strain Tohama I / ATCC BAA-589 / NCTC 13251) protein is Small ribosomal subunit protein uS9.